Reading from the N-terminus, the 278-residue chain is Pantothenate synthetase (278 aa).

26–33 (MGNLHEGH) provides a ligand contact to ATP. H33 (proton donor) is an active-site residue. Q57 contacts (R)-pantoate. A beta-alanine-binding site is contributed by Q57. Residue 144–147 (GKKD) coordinates ATP. Q150 contributes to the (R)-pantoate binding site. Residues G173 and 181–184 (LSSR) contribute to the ATP site.

The protein belongs to the pantothenate synthetase family. In terms of assembly, homodimer.

The protein resides in the cytoplasm. The catalysed reaction is (R)-pantoate + beta-alanine + ATP = (R)-pantothenate + AMP + diphosphate + H(+). Its pathway is cofactor biosynthesis; (R)-pantothenate biosynthesis; (R)-pantothenate from (R)-pantoate and beta-alanine: step 1/1. In terms of biological role, catalyzes the condensation of pantoate with beta-alanine in an ATP-dependent reaction via a pantoyl-adenylate intermediate. This chain is Pantothenate synthetase, found in Neisseria meningitidis serogroup C / serotype 2a (strain ATCC 700532 / DSM 15464 / FAM18).